A 196-amino-acid polypeptide reads, in one-letter code: Mpv17-like protein (196 aa).

Residues 1-16 (MVSWWQALTRAAGRYP) are Cytoplasmic-facing. The segment at 16 to 55 (PWPANVLLYAGFFSGGDALQQVLRGGPADWQHTRHVATVA) is targeting to peroxisomes. The helical transmembrane segment at 17-34 (WPANVLLYAGFFSGGDAL) threads the bilayer. The Lumenal portion of the chain corresponds to 35–50 (QQVLRGGPADWQHTRH). Residues 51 to 67 (VATVAVAFHANLNYVWL) traverse the membrane as a helical segment. Residues 68–90 (NLLERALPGRAPRTILAKVLCDQ) lie on the Cytoplasmic side of the membrane. A helical membrane pass occupies residues 91–108 (ALGGPVYVSTFYAGMSIL). Residues 109–150 (QGKDDIFLDMRQKFWNTYKSGLMYWPFVQLINFSLIPIRWRT) are Lumenal-facing. A helical transmembrane segment spans residues 151-167 (AYTGLCGFLWATFLCFS). Residues 168 to 196 (QQEGDGTFKSAFTFRRIKVTNEVEKPSEK) lie on the Cytoplasmic side of the membrane.

This sequence belongs to the peroxisomal membrane protein PXMP2/4 family.

Its subcellular location is the peroxisome membrane. In terms of biological role, participates in reactive oxygen species metabolism by up- or down-regulation of the genes of antioxidant enzymes. Protective against the mitochondrial apoptotic cascade. This Bos taurus (Bovine) protein is Mpv17-like protein (MPV17L).